Reading from the N-terminus, the 433-residue chain is MKALGEVFSKLVEKIRGVSYIDEATLQELSREIQRALLKADVPLDMVKTFTENAVKRMREEKPPAGIPPREYVLYILYDELVKLLGGEQPAEFKPVKKPYLVLLLGVEGSGKTTTAAKLARYLVKRGYRVGLVETDTIRPAAFDQLKQLAEKIGVPFYGERDSKDAVEIARRGVQNFKNMDVVIIDTAGRHKNEEALLQEVKMIYEAVNPDEVILVIDATVGKLAAAQAEAFMKYLPIHSVIITKMDSTARGGGALAAVIKTGARVKFIGVGEDVDEFDLFNPRKFVARVLGMGDLDALVEKIKAVFEEEKVLQEIESGRLDLLTFKKQIEGLLKLGPLSKVLQLLPGGFAAKISEEQVELSQKNLKKWYAILSSMTIEELKNPDILNASRIRRIALGAGVTPKDVKEMLTVYENLKKMSKTLKRQLRMRIPK.

Residues 106-113 (GVEGSGKT), 186-190 (DTAGR), and 244-247 (TKMD) contribute to the GTP site.

This sequence belongs to the GTP-binding SRP family. SRP54 subfamily. In terms of assembly, part of the signal recognition particle protein translocation system, which is composed of SRP and FtsY. Archaeal SRP consists of a 7S RNA molecule of 300 nucleotides and two protein subunits: SRP54 and SRP19.

It localises to the cytoplasm. The enzyme catalyses GTP + H2O = GDP + phosphate + H(+). Functionally, involved in targeting and insertion of nascent membrane proteins into the cytoplasmic membrane. Binds to the hydrophobic signal sequence of the ribosome-nascent chain (RNC) as it emerges from the ribosomes. The SRP-RNC complex is then targeted to the cytoplasmic membrane where it interacts with the SRP receptor FtsY. This chain is Signal recognition particle 54 kDa protein, found in Pyrobaculum islandicum (strain DSM 4184 / JCM 9189 / GEO3).